Consider the following 117-residue polypeptide: Big defensin (117 aa).

An N-terminal signal peptide occupies residues 1–23; sequence MKGNIGIAVFYMLLLLLPTDSIG. Residues 26 to 36 constitute a propeptide that is removed on maturation; it reads MEEEQEKLFRQ. Cystine bridges form between Cys-83–Cys-113, Cys-90–Cys-108, and Cys-94–Cys-114.

Belongs to the big defensin family. Interacts with intracellular coagulation inhibitor 1/LICI-1. As to expression, expressed in all tissues examined, including hemocytes, heart, hepatopancreas, stomach, intestine and skeletal muscle.

It is found in the secreted. Its function is as follows. Significantly inhibits the growth of Gram-negative and Gram-positive bacteria and fungi in vitro. The chain is Big defensin from Tachypleus tridentatus (Japanese horseshoe crab).